Consider the following 428-residue polypeptide: 3-oxo-tetronate kinase (428 aa).

Residues Ser267, 365-368 (GGET), and Gly409 each bind ATP.

The protein belongs to the four-carbon acid sugar kinase family.

It carries out the reaction 3-dehydro-L-erythronate + ATP = 3-dehydro-4-O-phospho-L-erythronate + ADP + H(+). The catalysed reaction is 3-dehydro-D-erythronate + ATP = 3-dehydro-4-O-phospho-D-erythronate + ADP + H(+). In terms of biological role, catalyzes the ATP-dependent phosphorylation of 3-oxo-tetronate to 3-oxo-tetronate 4-phosphate. The protein is 3-oxo-tetronate kinase of Burkholderia multivorans (strain ATCC 17616 / 249).